The sequence spans 329 residues: tRNA N6-adenosine threonylcarbamoyltransferase (329 aa).

Positions 110 and 114 each coordinate Fe cation. Substrate-binding positions include 132–136 (VISGG), Asp165, Gly178, and Asn271. Asp299 lines the Fe cation pocket.

The protein belongs to the KAE1 / TsaD family. It depends on Fe(2+) as a cofactor.

The protein resides in the cytoplasm. It carries out the reaction L-threonylcarbamoyladenylate + adenosine(37) in tRNA = N(6)-L-threonylcarbamoyladenosine(37) in tRNA + AMP + H(+). Functionally, required for the formation of a threonylcarbamoyl group on adenosine at position 37 (t(6)A37) in tRNAs that read codons beginning with adenine. Is involved in the transfer of the threonylcarbamoyl moiety of threonylcarbamoyl-AMP (TC-AMP) to the N6 group of A37, together with TsaE and TsaB. TsaD likely plays a direct catalytic role in this reaction. This is tRNA N6-adenosine threonylcarbamoyltransferase from Neorickettsia sennetsu (strain ATCC VR-367 / Miyayama) (Ehrlichia sennetsu).